The sequence spans 208 residues: Cytidylate kinase (208 aa).

Glycine 9–serine 17 serves as a coordination point for ATP.

Belongs to the cytidylate kinase family. Type 1 subfamily.

It is found in the cytoplasm. It carries out the reaction CMP + ATP = CDP + ADP. The enzyme catalyses dCMP + ATP = dCDP + ADP. This Thermus thermophilus (strain ATCC BAA-163 / DSM 7039 / HB27) protein is Cytidylate kinase.